The chain runs to 333 residues: Ribosomal RNA small subunit methyltransferase H (333 aa).

Residues 36–38, aspartate 54, phenylalanine 81, aspartate 102, and glutamine 109 contribute to the S-adenosyl-L-methionine site; that span reads GGY.

Belongs to the methyltransferase superfamily. RsmH family.

The protein resides in the cytoplasm. The catalysed reaction is cytidine(1402) in 16S rRNA + S-adenosyl-L-methionine = N(4)-methylcytidine(1402) in 16S rRNA + S-adenosyl-L-homocysteine + H(+). In terms of biological role, specifically methylates the N4 position of cytidine in position 1402 (C1402) of 16S rRNA. This is Ribosomal RNA small subunit methyltransferase H from Afipia carboxidovorans (strain ATCC 49405 / DSM 1227 / KCTC 32145 / OM5) (Oligotropha carboxidovorans).